We begin with the raw amino-acid sequence, 167 residues long: 2-C-methyl-D-erythritol 2,4-cyclodiphosphate synthase (167 aa).

A divalent metal cation is bound by residues D15 and H17. Residues 15 to 17 (DIH) and 43 to 44 (HS) contribute to the 4-CDP-2-C-methyl-D-erythritol 2-phosphate site. Position 51 (H51) interacts with a divalent metal cation. Residues 65-67 (DIG), 141-144 (TTNE), and R151 contribute to the 4-CDP-2-C-methyl-D-erythritol 2-phosphate site.

This sequence belongs to the IspF family. In terms of assembly, homotrimer. A divalent metal cation is required as a cofactor.

The enzyme catalyses 4-CDP-2-C-methyl-D-erythritol 2-phosphate = 2-C-methyl-D-erythritol 2,4-cyclic diphosphate + CMP. It participates in isoprenoid biosynthesis; isopentenyl diphosphate biosynthesis via DXP pathway; isopentenyl diphosphate from 1-deoxy-D-xylulose 5-phosphate: step 4/6. Its function is as follows. Involved in the biosynthesis of isopentenyl diphosphate (IPP) and dimethylallyl diphosphate (DMAPP), two major building blocks of isoprenoid compounds. Catalyzes the conversion of 4-diphosphocytidyl-2-C-methyl-D-erythritol 2-phosphate (CDP-ME2P) to 2-C-methyl-D-erythritol 2,4-cyclodiphosphate (ME-CPP) with a corresponding release of cytidine 5-monophosphate (CMP). The sequence is that of 2-C-methyl-D-erythritol 2,4-cyclodiphosphate synthase from Prochlorococcus marinus (strain MIT 9312).